Consider the following 242-residue polypeptide: Probable septum site-determining protein MinC (242 aa).

Belongs to the MinC family. In terms of assembly, interacts with MinD and FtsZ.

Its function is as follows. Cell division inhibitor that blocks the formation of polar Z ring septums. Rapidly oscillates between the poles of the cell to destabilize FtsZ filaments that have formed before they mature into polar Z rings. Prevents FtsZ polymerization. The sequence is that of Probable septum site-determining protein MinC from Agrobacterium fabrum (strain C58 / ATCC 33970) (Agrobacterium tumefaciens (strain C58)).